A 357-amino-acid polypeptide reads, in one-letter code: 3-isopropylmalate dehydrogenase (357 aa).

77–90 (GPKWDTLPGEKRPE) provides a ligand contact to NAD(+). Residues arginine 97, arginine 107, arginine 136, and aspartate 224 each contribute to the substrate site. The Mg(2+) site is built by aspartate 224, aspartate 248, and aspartate 252. Residue 282–294 (GSAPDIAGQDLAN) participates in NAD(+) binding.

The protein belongs to the isocitrate and isopropylmalate dehydrogenases family. LeuB type 1 subfamily. As to quaternary structure, homodimer. Mg(2+) is required as a cofactor. It depends on Mn(2+) as a cofactor.

Its subcellular location is the cytoplasm. The catalysed reaction is (2R,3S)-3-isopropylmalate + NAD(+) = 4-methyl-2-oxopentanoate + CO2 + NADH. It participates in amino-acid biosynthesis; L-leucine biosynthesis; L-leucine from 3-methyl-2-oxobutanoate: step 3/4. In terms of biological role, catalyzes the oxidation of 3-carboxy-2-hydroxy-4-methylpentanoate (3-isopropylmalate) to 3-carboxy-4-methyl-2-oxopentanoate. The product decarboxylates to 4-methyl-2 oxopentanoate. This chain is 3-isopropylmalate dehydrogenase, found in Clostridium acetobutylicum (strain ATCC 824 / DSM 792 / JCM 1419 / IAM 19013 / LMG 5710 / NBRC 13948 / NRRL B-527 / VKM B-1787 / 2291 / W).